The primary structure comprises 135 residues: DNA-directed RNA polymerase subunit omega (135 aa).

It belongs to the RNA polymerase subunit omega family. In terms of assembly, the RNAP catalytic core consists of 2 alpha, 1 beta, 1 beta' and 1 omega subunit. When a sigma factor is associated with the core the holoenzyme is formed, which can initiate transcription.

The catalysed reaction is RNA(n) + a ribonucleoside 5'-triphosphate = RNA(n+1) + diphosphate. Functionally, promotes RNA polymerase assembly. Latches the N- and C-terminal regions of the beta' subunit thereby facilitating its interaction with the beta and alpha subunits. This Sinorhizobium medicae (strain WSM419) (Ensifer medicae) protein is DNA-directed RNA polymerase subunit omega.